The following is a 416-amino-acid chain: Calreticulin (416 aa).

A signal peptide spans 1–17 (MLLSVPLLLGLLGLAAA). The segment at 18–197 (DPAIYFKEQF…NSQVESGSLE (180 aa)) is N-domain. Gln26 serves as a coordination point for Ca(2+). N6-acetyllysine is present on Lys48. Ca(2+) contacts are provided by Lys62 and Lys64. N6-(2-hydroxyisobutyryl)lysine is present on Lys64. Cysteines 105 and 137 form a disulfide. Residues Tyr109, Lys111, Tyr128, and Asp135 each coordinate an alpha-D-glucoside. Lys159 is modified (N6-acetyllysine). The 1-1 repeat unit spans residues 191–202 (VESGSLEDDWDF). The interval 191–255 (VESGSLEDDW…DAKKPEDWDE (65 aa)) is 4 X approximate repeats. The disordered stretch occupies residues 193 to 277 (SGSLEDDWDF…NPEYKGEWKP (85 aa)). Residues 198–308 (DDWDFLPPKK…YSPDANIYAY (111 aa)) are P-domain. Residues 207–251 (KIKDPDAAKPEDWDERAKIDDPTDSKPEDWDKPEHIPDPDAKKPE) are compositionally biased toward basic and acidic residues. At Lys209 the chain carries N6-acetyllysine. 6 repeat units span residues 210–221 (DPDAAKPEDWDE), 227–238 (DPTDSKPEDWDK), 244–255 (DPDAKKPEDWDE), 259–269 (GEWEPPVIQNP), 273–283 (GEWKPRQIDNP), and 287–297 (GTWIHPEIDNP). Residues 237–270 (DKPEHIPDPDAKKPEDWDEEMDGEWEPPVIQNPE) form an interaction with PPIB region. A compositionally biased stretch (acidic residues) spans 252-261 (DWDEEMDGEW). Residues 259-297 (GEWEPPVIQNPEYKGEWKPRQIDNPDYKGTWIHPEIDNP) form a 3 X approximate repeats region. Positions 309–416 (DSFAVLGLDL…DATGQAKDEL (108 aa)) are C-domain. Asp317 contributes to the an alpha-D-glucoside binding site. Asp328 lines the Ca(2+) pocket. The disordered stretch occupies residues 350–416 (TKAAEKQMKD…DATGQAKDEL (67 aa)). Residues 352 to 379 (AAEKQMKDKQDEEQRLKEEEEDKKRKEE) are compositionally biased toward basic and acidic residues. Over residues 380 to 408 (EEAEDKEDEDDRDEDEDEEDEKEEDEEDA) the composition is skewed to acidic residues. Positions 413-416 (KDEL) match the Prevents secretion from ER motif.

This sequence belongs to the calreticulin family. As to quaternary structure, monomer. Component of an EIF2 complex at least composed of CELF1/CUGBP1, CALR, CALR3, EIF2S1, EIF2S2, HSP90B1 and HSPA5. Interacts with GABARAP, NR3C1 and TRIM21. Interacts with PPIB and SPACA9. Interacts (via P-domain) with PDIA5. Interacts with PDIA3/ERp57. Interacts with CLCC1. Predentin and odontoblast.

The protein resides in the endoplasmic reticulum lumen. The protein localises to the cytoplasm. It localises to the cytosol. It is found in the secreted. Its subcellular location is the extracellular space. The protein resides in the extracellular matrix. The protein localises to the cell surface. It localises to the sarcoplasmic reticulum lumen. It is found in the cytoplasmic vesicle. Its subcellular location is the secretory vesicle. The protein resides in the cortical granule. The protein localises to the cytolytic granule. Calcium-binding chaperone that promotes folding, oligomeric assembly and quality control in the endoplasmic reticulum (ER) via the calreticulin/calnexin cycle. This lectin interacts transiently with almost all of the monoglucosylated glycoproteins that are synthesized in the ER. Interacts with the DNA-binding domain of NR3C1 and mediates its nuclear export. Involved in maternal gene expression regulation. May participate in oocyte maturation via the regulation of calcium homeostasis. Present in the cortical granules of non-activated oocytes, is exocytosed during the cortical reaction in response to oocyte activation and might participate in the block to polyspermy. The chain is Calreticulin (Calr) from Rattus norvegicus (Rat).